The primary structure comprises 450 residues: Cysteine proteinase (450 aa).

Positions 1–20 (MPRTEMVRFVRLPVVLLAMA) are cleaved as a signal peptide. Positions 21 to 125 (ACLASVALGS…RKTVNVTTGR (105 aa)) are cleaved as a propeptide — activation peptide. N120 carries N-linked (GlcNAc...) asparagine glycosylation. A disulfide bond links C147 and C188. Residues C150, H287, and N307 contribute to the active site. Residues 343–450 (TPPPPPPPPP…TKAARLVPHQ (108 aa)) form a 108-residue extension region. An N-linked (GlcNAc...) asparagine glycan is attached at N397.

It belongs to the peptidase C1 family.

It is found in the lysosome. In terms of biological role, the cysteine proteinases have a potential role in host-parasite interaction and virulence. The chain is Cysteine proteinase from Trypanosoma brucei brucei.